The chain runs to 181 residues: MRPMHGTTVLCVRREGRVVIAGDGQVTLDKTVMKATARKVRRLGEGQVVAGFAGATADAFQLFELFEKKLKEHARSLPRAAVELAKQWRTDRMLRRLEALLVVADREHVLVLSGAGDVIEPDPVANGAAVAIGSGGPYALAAARALLAHSSLDARRVAEEAMKLAAEICIYTNGNLTIEEL.

Thr-7 is a catalytic residue. The Na(+) site is built by Ala-166, Cys-169, and Thr-172.

The protein belongs to the peptidase T1B family. HslV subfamily. As to quaternary structure, a double ring-shaped homohexamer of HslV is capped on each side by a ring-shaped HslU homohexamer. The assembly of the HslU/HslV complex is dependent on binding of ATP.

It is found in the cytoplasm. It catalyses the reaction ATP-dependent cleavage of peptide bonds with broad specificity.. Its activity is regulated as follows. Allosterically activated by HslU binding. In terms of biological role, protease subunit of a proteasome-like degradation complex believed to be a general protein degrading machinery. The protein is ATP-dependent protease subunit HslV of Anaeromyxobacter dehalogenans (strain 2CP-C).